Here is a 445-residue protein sequence, read N- to C-terminus: Transcription termination factor MTERF15, mitochondrial (445 aa).

The transit peptide at 1–25 (MASKLKTFINLRDYPITLFNQIRSL) directs the protein to the mitochondrion.

The protein belongs to the mTERF family.

Its subcellular location is the mitochondrion. In terms of biological role, transcription termination factor required for mitochondrial NAD2 intron 3 splicing and normal membrane respiratory chain Complex I activity. Essential for normal plant growth and development. Binds to RNA but not to double-stranded DNA. This is Transcription termination factor MTERF15, mitochondrial from Arabidopsis thaliana (Mouse-ear cress).